The chain runs to 103 residues: Large ribosomal subunit protein eL30 (103 aa).

Belongs to the eukaryotic ribosomal protein eL30 family.

This chain is Large ribosomal subunit protein eL30, found in Methanothrix thermoacetophila (strain DSM 6194 / JCM 14653 / NBRC 101360 / PT) (Methanosaeta thermophila).